Consider the following 387-residue polypeptide: Probable peptidoglycan glycosyltransferase FtsW (387 aa).

The next 9 helical transmembrane spans lie at 19 to 39 (LDFS…VMVA), 61 to 81 (ITFL…PMSV), 86 to 106 (SGLL…PGIG), 118 to 138 (LGPF…VYFA), 161 to 181 (VLLI…SVVI), 199 to 219 (FLLL…ASPY), 286 to 306 (FIGA…LVIL), 320 to 340 (YVVF…MGVA), and 352 to 372 (PFIS…ALVF).

It belongs to the SEDS family. FtsW subfamily.

It localises to the cell inner membrane. It carries out the reaction [GlcNAc-(1-&gt;4)-Mur2Ac(oyl-L-Ala-gamma-D-Glu-L-Lys-D-Ala-D-Ala)](n)-di-trans,octa-cis-undecaprenyl diphosphate + beta-D-GlcNAc-(1-&gt;4)-Mur2Ac(oyl-L-Ala-gamma-D-Glu-L-Lys-D-Ala-D-Ala)-di-trans,octa-cis-undecaprenyl diphosphate = [GlcNAc-(1-&gt;4)-Mur2Ac(oyl-L-Ala-gamma-D-Glu-L-Lys-D-Ala-D-Ala)](n+1)-di-trans,octa-cis-undecaprenyl diphosphate + di-trans,octa-cis-undecaprenyl diphosphate + H(+). The protein operates within cell wall biogenesis; peptidoglycan biosynthesis. Peptidoglycan polymerase that is essential for cell division. This is Probable peptidoglycan glycosyltransferase FtsW from Saccharophagus degradans (strain 2-40 / ATCC 43961 / DSM 17024).